The following is a 257-amino-acid chain: Thiazole synthase (257 aa).

The Schiff-base intermediate with DXP role is filled by Lys99. 1-deoxy-D-xylulose 5-phosphate is bound by residues Gly160, 186–187 (AG), and 208–209 (NT).

The protein belongs to the ThiG family. Homotetramer. Forms heterodimers with either ThiH or ThiS.

The protein localises to the cytoplasm. It catalyses the reaction [ThiS sulfur-carrier protein]-C-terminal-Gly-aminoethanethioate + 2-iminoacetate + 1-deoxy-D-xylulose 5-phosphate = [ThiS sulfur-carrier protein]-C-terminal Gly-Gly + 2-[(2R,5Z)-2-carboxy-4-methylthiazol-5(2H)-ylidene]ethyl phosphate + 2 H2O + H(+). The protein operates within cofactor biosynthesis; thiamine diphosphate biosynthesis. Its function is as follows. Catalyzes the rearrangement of 1-deoxy-D-xylulose 5-phosphate (DXP) to produce the thiazole phosphate moiety of thiamine. Sulfur is provided by the thiocarboxylate moiety of the carrier protein ThiS. In vitro, sulfur can be provided by H(2)S. This is Thiazole synthase from Thermodesulfovibrio yellowstonii (strain ATCC 51303 / DSM 11347 / YP87).